The chain runs to 196 residues: Imidazole glycerol phosphate synthase subunit HisH (196 aa).

The 195-residue stretch at 2–196 (NVVILDTGCA…AKLLKNFLEM (195 aa)) folds into the Glutamine amidotransferase type-1 domain. Residue C77 is the Nucleophile of the active site. Catalysis depends on residues H178 and E180.

As to quaternary structure, heterodimer of HisH and HisF.

The protein resides in the cytoplasm. It carries out the reaction 5-[(5-phospho-1-deoxy-D-ribulos-1-ylimino)methylamino]-1-(5-phospho-beta-D-ribosyl)imidazole-4-carboxamide + L-glutamine = D-erythro-1-(imidazol-4-yl)glycerol 3-phosphate + 5-amino-1-(5-phospho-beta-D-ribosyl)imidazole-4-carboxamide + L-glutamate + H(+). The enzyme catalyses L-glutamine + H2O = L-glutamate + NH4(+). It functions in the pathway amino-acid biosynthesis; L-histidine biosynthesis; L-histidine from 5-phospho-alpha-D-ribose 1-diphosphate: step 5/9. Its function is as follows. IGPS catalyzes the conversion of PRFAR and glutamine to IGP, AICAR and glutamate. The HisH subunit catalyzes the hydrolysis of glutamine to glutamate and ammonia as part of the synthesis of IGP and AICAR. The resulting ammonia molecule is channeled to the active site of HisF. The chain is Imidazole glycerol phosphate synthase subunit HisH from Shigella flexneri.